Consider the following 102-residue polypeptide: Large ribosomal subunit protein uL24 (102 aa).

Belongs to the universal ribosomal protein uL24 family. As to quaternary structure, part of the 50S ribosomal subunit.

Its function is as follows. One of two assembly initiator proteins, it binds directly to the 5'-end of the 23S rRNA, where it nucleates assembly of the 50S subunit. One of the proteins that surrounds the polypeptide exit tunnel on the outside of the subunit. The sequence is that of Large ribosomal subunit protein uL24 from Limosilactobacillus reuteri (strain DSM 20016) (Lactobacillus reuteri).